The primary structure comprises 255 residues: Pyrroloquinoline-quinone synthase (255 aa).

Belongs to the PqqC family.

It catalyses the reaction 6-(2-amino-2-carboxyethyl)-7,8-dioxo-1,2,3,4,7,8-hexahydroquinoline-2,4-dicarboxylate + 3 O2 = pyrroloquinoline quinone + 2 H2O2 + 2 H2O + H(+). The protein operates within cofactor biosynthesis; pyrroloquinoline quinone biosynthesis. In terms of biological role, ring cyclization and eight-electron oxidation of 3a-(2-amino-2-carboxyethyl)-4,5-dioxo-4,5,6,7,8,9-hexahydroquinoline-7,9-dicarboxylic-acid to PQQ. This is Pyrroloquinoline-quinone synthase from Cereibacter sphaeroides (strain KD131 / KCTC 12085) (Rhodobacter sphaeroides).